We begin with the raw amino-acid sequence, 1058 residues long: UPF0507 protein YALI0E18612g (1058 aa).

The region spanning 252 to 394 is the VPS9 domain; that stretch reads TNEDGPLDQA…IGENREQLEA (143 aa).

The protein belongs to the UPF0507 family.

The chain is UPF0507 protein YALI0E18612g from Yarrowia lipolytica (strain CLIB 122 / E 150) (Yeast).